The following is a 150-amino-acid chain: UPF0756 membrane protein NT05HA_0561 (150 aa).

A run of 4 helical transmembrane segments spans residues 1 to 21 (MSLQ…LGIF), 52 to 72 (YGLS…LVSG), 81 to 101 (AFVS…AWLA), and 128 to 148 (FLGG…VLIG).

This sequence belongs to the UPF0756 family.

The protein resides in the cell membrane. The protein is UPF0756 membrane protein NT05HA_0561 of Aggregatibacter aphrophilus (strain NJ8700) (Haemophilus aphrophilus).